Here is a 38-residue protein sequence, read N- to C-terminus: Toxic protein TimP (38 aa).

The segment at 1–20 is a transmembrane helix; the sequence is MKVRCFCVVLLVSGTLCLHA.

Belongs to the TimP toxin family.

It is found in the cell inner membrane. Functionally, toxic component of a probable type I toxin-antitoxin (TA) system. Neutralized by sRNA antitoxin TimR which binds to the 5' UTR of timP mRNA and inhibits translation. When TimP is expressed from its promoter in the absence of antitoxin leads to mild cell stress; overexpression in situ is toxic to the cell and causes membrane leakage. The antitoxin gene is encoded immediately upstream and transcribed divergently from the toxin gene; antitoxin RNA is less stable than timP mRNA. This chain is Toxic protein TimP, found in Salmonella typhimurium (strain SL1344).